The chain runs to 271 residues: uncharacterized protein (271 aa).

This is an uncharacterized protein from Saccharomyces cerevisiae (strain ATCC 204508 / S288c) (Baker's yeast).